The sequence spans 447 residues: Asparagine--tRNA ligase (447 aa).

The protein belongs to the class-II aminoacyl-tRNA synthetase family. In terms of assembly, homodimer.

Its subcellular location is the cytoplasm. It carries out the reaction tRNA(Asn) + L-asparagine + ATP = L-asparaginyl-tRNA(Asn) + AMP + diphosphate + H(+). This is Asparagine--tRNA ligase from Lactococcus lactis subsp. cremoris (strain SK11).